The chain runs to 463 residues: Glutamate--tRNA ligase 1 (463 aa).

Residues Pro-10–Gly-20 carry the 'HIGH' region motif. A 'KMSKS' region motif is present at residues Lys-238 to Arg-242. Position 241 (Lys-241) interacts with ATP.

This sequence belongs to the class-I aminoacyl-tRNA synthetase family. Glutamate--tRNA ligase type 1 subfamily. In terms of assembly, monomer.

The protein resides in the cytoplasm. It catalyses the reaction tRNA(Glu) + L-glutamate + ATP = L-glutamyl-tRNA(Glu) + AMP + diphosphate. Catalyzes the attachment of glutamate to tRNA(Glu) in a two-step reaction: glutamate is first activated by ATP to form Glu-AMP and then transferred to the acceptor end of tRNA(Glu). The sequence is that of Glutamate--tRNA ligase 1 from Helicobacter pylori (strain G27).